The primary structure comprises 180 residues: N-terminal acetyltransferase B complex catalytic subunit naa20 (180 aa).

The N-acetyltransferase domain occupies 2 to 156; sequence TDTRKFKATD…DSFDMRKPLS (155 aa).

Belongs to the acetyltransferase family. Component of the N-terminal acetyltransferase B (NatB) complex.

It localises to the cytoplasm. It is found in the nucleus. The catalysed reaction is N-terminal L-methionyl-L-asparaginyl-[protein] + acetyl-CoA = N-terminal N(alpha)-acetyl-L-methionyl-L-asparaginyl-[protein] + CoA + H(+). It carries out the reaction N-terminal L-methionyl-L-glutaminyl-[protein] + acetyl-CoA = N-terminal N(alpha)-acetyl-L-methionyl-L-glutaminyl-[protein] + CoA + H(+). The enzyme catalyses N-terminal L-methionyl-L-aspartyl-[protein] + acetyl-CoA = N-terminal N(alpha)-acetyl-L-methionyl-L-aspartyl-[protein] + CoA + H(+). It catalyses the reaction N-terminal L-methionyl-L-glutamyl-[protein] + acetyl-CoA = N-terminal N(alpha)-acetyl-L-methionyl-L-glutamyl-[protein] + CoA + H(+). Catalytic subunit of the NatB N-terminal acetyltransferase, which catalyzes acetylation of the amino-terminal methionine residues of all proteins beginning with Met-Asp or Met-Glu and of some proteins beginning with Met-Asn, Met-Gln or Met-Met. This is N-terminal acetyltransferase B complex catalytic subunit naa20 (naa20) from Schizosaccharomyces pombe (strain 972 / ATCC 24843) (Fission yeast).